A 239-amino-acid chain; its full sequence is Octanoyltransferase (239 aa).

The BPL/LPL catalytic domain maps to 48 to 236; sequence EGGDELVWLV…AFETVFGETT (189 aa). Residues 87–94, 167–169, and 180–182 each bind substrate; these read RGGEYTYH, ALG, and GLS. The active-site Acyl-thioester intermediate is the cysteine 198.

Belongs to the LipB family.

The protein resides in the cytoplasm. It carries out the reaction octanoyl-[ACP] + L-lysyl-[protein] = N(6)-octanoyl-L-lysyl-[protein] + holo-[ACP] + H(+). It functions in the pathway protein modification; protein lipoylation via endogenous pathway; protein N(6)-(lipoyl)lysine from octanoyl-[acyl-carrier-protein]: step 1/2. Functionally, catalyzes the transfer of endogenously produced octanoic acid from octanoyl-acyl-carrier-protein onto the lipoyl domains of lipoate-dependent enzymes. Lipoyl-ACP can also act as a substrate although octanoyl-ACP is likely to be the physiological substrate. The protein is Octanoyltransferase of Rhizobium etli (strain ATCC 51251 / DSM 11541 / JCM 21823 / NBRC 15573 / CFN 42).